A 674-amino-acid polypeptide reads, in one-letter code: Multifunctional alkene reductase/demethylase OYE (674 aa).

FMN contacts are provided by glycine 62 and glutamine 105. The active-site Proton donor is the histidine 175. FMN contacts are provided by arginine 223 and lysine 299. The [4Fe-4S] cluster site is built by cysteine 345, cysteine 351, and cysteine 358. 3 residues coordinate FAD: alanine 391, glutamine 418, and arginine 428.

The protein in the N-terminal section; belongs to the NADH:flavin oxidoreductase/NADH oxidase family. It depends on [4Fe-4S] cluster as a cofactor. FAD serves as cofactor. FMN is required as a cofactor.

The catalysed reaction is 3-phenylpropanoate + NAD(+) = (E)-cinnamate + NADH + H(+). It carries out the reaction N-methyl-L-proline + NAD(+) + H2O = L-proline + formaldehyde + NADH + H(+). Its function is as follows. A member of the 2-enoate reductase subfamily of old yellow enzymes (OYE) able to reduce alpha/beta alkenes near electron-withdrawing groups as well as perform oxidative demethylation chemistry. Prefers NADH over NADPH as cosubstrate. May play a role in osmotic stress response in situ. The polypeptide is Multifunctional alkene reductase/demethylase OYE (Caballeronia cordobensis (Burkholderia cordobensis)).